The chain runs to 439 residues: Chitinase-like protein Idgf1 (439 aa).

The signal sequence occupies residues 1–20 (MRFQLFYILGLLSVTSLTHA). In terms of domain architecture, GH18 spans 22–439 (SNLICYYDSN…ILRSIKYFMG (418 aa)). An intrachain disulfide couples C26 to C53. N-linked (GlcNAc...) asparagine glycans are attached at residues N122, N218, and N346. Residues C340 and C423 are joined by a disulfide bond.

It belongs to the glycosyl hydrolase 18 family. IDGF subfamily. Primarily expressed in yolk cells and fat body. In larvae, it is expressed in large salivary gland cells and weakly expressed in imaginal disks. Less expressed than Idgf2 and Idgf4.

The protein localises to the secreted. In terms of biological role, cooperates with insulin-like peptides to stimulate the proliferation, polarization and motility of imaginal disk cells. May act by stabilizing the binding of insulin-like peptides to its receptor through a simultaneous interaction with both molecules to form a multiprotein signaling complex. The polypeptide is Chitinase-like protein Idgf1 (Idgf1) (Drosophila melanogaster (Fruit fly)).